The primary structure comprises 521 residues: Probable glycine dehydrogenase (decarboxylating) subunit 2 (521 aa).

Position 279 is an N6-(pyridoxal phosphate)lysine (K279).

This sequence belongs to the GcvP family. C-terminal subunit subfamily. As to quaternary structure, the glycine cleavage system is composed of four proteins: P, T, L and H. In this organism, the P 'protein' is a heterodimer of two subunits. Requires pyridoxal 5'-phosphate as cofactor.

It catalyses the reaction N(6)-[(R)-lipoyl]-L-lysyl-[glycine-cleavage complex H protein] + glycine + H(+) = N(6)-[(R)-S(8)-aminomethyldihydrolipoyl]-L-lysyl-[glycine-cleavage complex H protein] + CO2. Functionally, the glycine cleavage system catalyzes the degradation of glycine. The P protein binds the alpha-amino group of glycine through its pyridoxal phosphate cofactor; CO(2) is released and the remaining methylamine moiety is then transferred to the lipoamide cofactor of the H protein. This is Probable glycine dehydrogenase (decarboxylating) subunit 2 from Staphylothermus marinus (strain ATCC 43588 / DSM 3639 / JCM 9404 / F1).